The primary structure comprises 944 residues: Altered inheritance of mitochondria protein 3 (944 aa).

Disordered regions lie at residues 1 to 331, 349 to 805, 821 to 901, and 916 to 944; these read MGFW…PQMN, MSST…TGQD, RKTN…KSLE, and SAADDNLNPFERYKRNVVPQEDDRLHKLK. Over residues 36–54 the composition is skewed to basic residues; sequence ASKKHYNNSKARRERKSGK. Ser-57, Ser-58, and Ser-64 each carry phosphoserine. The span at 59–69 shows a compositional bias: acidic residues; sequence DEEYESEDEME. Residues 70 to 84 show a composition bias toward basic and acidic residues; that stretch reads YERKPTDIRSLKDPK. 2 stretches are compositionally biased toward low complexity: residues 93-105 and 130-158; these read PGQKTYAGQQQQQ and QSQYAQPQYNQYPQQQLQQGVVPQQPPIY. Positions 166–244 are enriched in polar residues; the sequence is GSNSNATSYQ…YVSHGSTNLG (79 aa). Composition is skewed to low complexity over residues 245–267 and 306–318; these read QSQFPSGQQQQPTTQFGQQVLPS and QQQQQQQQQQQQQ. Positions 349–362 are enriched in polar residues; the sequence is MSSTTNMQDSNPSY. The span at 374–390 shows a compositional bias: pro residues; that stretch reads GGQPPVPVRMQPQPPQP. The segment covering 461-470 has biased composition (polar residues); it reads IQPNTTSSAA. Ser-471 is subject to Phosphoserine. 3 stretches are compositionally biased toward basic and acidic residues: residues 483 to 497, 521 to 536, and 606 to 623; these read DNERNSGNKENDEST, HGLDSVPSEHTRKNAL, and EIKDEVLPGHPSEEDRNV. 2 stretches are compositionally biased toward low complexity: residues 625–640 and 664–673; these read PSLLPQSKPQSKSQSQ and SQSSNSSDSS. A Phosphothreonine modification is found at Thr-726. The span at 746–756 shows a compositional bias: basic and acidic residues; the sequence is DSSKDANKYEK. A compositionally biased stretch (polar residues) spans 760 to 771; that stretch reads PVTSSIQAQQST. Thr-858 carries the post-translational modification Phosphothreonine. Residues 859-876 are compositionally biased toward pro residues; it reads PPRPPPSRSSPKKVPPVV. Basic residues predominate over residues 885 to 896; the sequence is KKPPVVPKKKPL.

It belongs to the AIM3 family. Interacts with RVS167.

Its subcellular location is the membrane raft. The chain is Altered inheritance of mitochondria protein 3 (AIM3) from Saccharomyces cerevisiae (strain YJM789) (Baker's yeast).